The following is a 374-amino-acid chain: uncharacterized protein (374 aa).

It belongs to the mimivirus L41 family.

This is an uncharacterized protein from Acanthamoeba polyphaga (Amoeba).